Reading from the N-terminus, the 446-residue chain is Glucose transporter GlcP (446 aa).

The Cytoplasmic portion of the chain corresponds to 1–6 (MKANKY). The chain crosses the membrane as a helical span at residues 7–31 (LIFILGALGGLLYGYDNGVISGALL). Topologically, residues 32–38 (FIHKDIP) are extracellular. The chain crosses the membrane as a helical span at residues 39–64 (LNSTTEGIVVSSMLIGAIVGAGSSGP). Over 65–70 (LADKLG) the chain is Cytoplasmic. A helical membrane pass occupies residues 71 to 90 (RRRLVMLIAIVFIIGALILA). Residues 91 to 94 (ASTN) are Extracellular-facing. Residues 95–122 (LALLIIGRLIIGLAVGGSMSTVPVYLSE) form a helical membrane-spanning segment. Topologically, residues 123–129 (MAPTEYR) are cytoplasmic. Residues 130-152 (GSLGSLNQLMITIGILAAYLVNY) form a helical membrane-spanning segment. At 153–154 (AF) the chain is on the extracellular side. The helical transmembrane segment at 155–180 (ADIEGWRWMLGLAVVPSVILLVGIYF) threads the bilayer. At 181–234 (MPESPRWLLENRNEEAARQVMKITYDDSEIDKELKEMKEINAISESTWTVIKSP) the chain is on the cytoplasmic side. The chain crosses the membrane as a helical span at residues 235–269 (WLGRILIVGCIFAIFQQFIGINAVIFYSSSIFAKA). Residues 270-272 (GLG) lie on the Extracellular side of the membrane. The helical transmembrane segment at 273 to 295 (EAASILGSVGIGTINVLVTIVAI) threads the bilayer. The Cytoplasmic portion of the chain corresponds to 296–303 (FVVDKIDR). Residues 304–324 (KKLLVGGNIGMIASLLIMAIL) traverse the membrane as a helical segment. Residues 325-329 (IWTIG) lie on the Extracellular side of the membrane. A helical membrane pass occupies residues 330 to 363 (IASSAWIIIVCLSLFIVFFGISWGPVLWVMLPEL). The Cytoplasmic portion of the chain corresponds to 364–370 (FPMRARG). Residues 371-399 (AATGISALVLNIGTLIVSLFFPILSDALS) traverse the membrane as a helical segment. Topologically, residues 400–401 (TE) are extracellular. The chain crosses the membrane as a helical span at residues 402-420 (WVFLIFAFIGVLAMIFVIK). The Cytoplasmic segment spans residues 421–446 (FLPETRGRSLEEIEYELRERTGARTE).

Belongs to the major facilitator superfamily. Sugar transporter (TC 2.A.1.1) family.

It localises to the cell membrane. With respect to regulation, inhibited by carbonyl cyanide m-chlorophenylhydrazone (CCCP) and by the human glucose transport inhibitors cytochalasin B, phloretin, and forskolin. Functionally, transporter highly specific for glucose uptake. This is Glucose transporter GlcP from Staphylococcus epidermidis (strain ATCC 12228 / FDA PCI 1200).